The sequence spans 484 residues: Phosphatidylinositol N-acetylglucosaminyltransferase subunit A (484 aa).

The Cytoplasmic segment spans residues 1–421 (MACRGGAGNG…RLDRLISHCG (421 aa)). S21 and S24 each carry phosphoserine. The helical transmembrane segment at 422 to 442 (PVTGYIFALLAVFNFLFLIFL) threads the bilayer. At 443–484 (RWMTPDSIIDVAIDATGPRGAWTNNYSHSKRGGENNEISETR) the chain is on the lumenal side. Residue N467 is glycosylated (N-linked (GlcNAc...) asparagine).

It belongs to the glycosyltransferase group 1 family. Glycosyltransferase 4 subfamily. Component of the glycosylphosphatidylinositol-N-acetylglucosaminyltransferase (GPI-GnT) complex composed at least by PIGA, PIGC, PIGH, PIGP, PIGQ, PIGY and DPM2. Interacts with PIGC, PIGH, PIGP, PIGQ and DPM2. Interacts directly with PIGY; this interaction regulates glycosylphosphatidylinositol-N-acetylglucosaminyltransferase activity. Interacts with PIGQ.

The protein resides in the endoplasmic reticulum membrane. The enzyme catalyses a 1,2-diacyl-sn-glycero-3-phospho-(1D-myo-inositol) + UDP-N-acetyl-alpha-D-glucosamine = a 6-(N-acetyl-alpha-D-glucosaminyl)-1-(1,2-diacyl-sn-glycero-3-phospho)-1D-myo-inositol + UDP + H(+). Its pathway is glycolipid biosynthesis; glycosylphosphatidylinositol-anchor biosynthesis. Its function is as follows. Catalytic subunit of the glycosylphosphatidylinositol-N-acetylglucosaminyltransferase (GPI-GnT) complex that catalyzes the transfer of N-acetylglucosamine from UDP-N-acetylglucosamine to phosphatidylinositol and participates in the first step of GPI biosynthesis. This is Phosphatidylinositol N-acetylglucosaminyltransferase subunit A from Homo sapiens (Human).